Reading from the N-terminus, the 100-residue chain is Proline-rich protein 15-like protein (100 aa).

The disordered stretch occupies residues 26-100 (PDTYTQSEGG…LFDDREGKGQ (75 aa)). Residues 53-62 (RLEKIVDKNT) are compositionally biased toward basic and acidic residues.

Belongs to the PRR15 family.

The sequence is that of Proline-rich protein 15-like protein (PRR15L) from Bos taurus (Bovine).